The sequence spans 996 residues: Alanine--tRNA ligase, chloroplastic/mitochondrial (996 aa).

Zn(2+)-binding residues include His677, His681, Cys779, and His783.

Belongs to the class-II aminoacyl-tRNA synthetase family. As to quaternary structure, monomer. The cofactor is Zn(2+).

The protein localises to the plastid. It localises to the chloroplast. The protein resides in the mitochondrion. It carries out the reaction tRNA(Ala) + L-alanine + ATP = L-alanyl-tRNA(Ala) + AMP + diphosphate. Its function is as follows. Catalyzes the attachment of alanine to tRNA(Ala) in a two-step reaction: alanine is first activated by ATP to form Ala-AMP and then transferred to the acceptor end of tRNA(Ala). Also edits incorrectly charged tRNA(Ala) via its editing domain. This Oryza sativa subsp. indica (Rice) protein is Alanine--tRNA ligase, chloroplastic/mitochondrial.